The primary structure comprises 275 residues: DNA repair protein RecO (275 aa).

Residues M1–S38 are disordered. Low complexity predominate over residues D8–D24.

The protein belongs to the RecO family.

Involved in DNA repair and RecF pathway recombination. In Burkholderia pseudomallei (strain 1710b), this protein is DNA repair protein RecO.